Consider the following 129-residue polypeptide: Small ribosomal subunit protein uS13 (129 aa).

Over residues 92–114 the composition is skewed to basic residues; it reads HKHNLPVRGQRTKTNARTRRGPR. Residues 92 to 129 are disordered; that stretch reads HKHNLPVRGQRTKTNARTRRGPRKTVAGRGQKRGATKK.

This sequence belongs to the universal ribosomal protein uS13 family. Part of the 30S ribosomal subunit. Forms a loose heterodimer with protein S19. Forms two bridges to the 50S subunit in the 70S ribosome.

Functionally, located at the top of the head of the 30S subunit, it contacts several helices of the 16S rRNA. In the 70S ribosome it contacts the 23S rRNA (bridge B1a) and protein L5 of the 50S subunit (bridge B1b), connecting the 2 subunits; these bridges are implicated in subunit movement. Contacts the tRNAs in the A and P-sites. The sequence is that of Small ribosomal subunit protein uS13 from Dehalococcoides mccartyi (strain ATCC BAA-2266 / KCTC 15142 / 195) (Dehalococcoides ethenogenes (strain 195)).